Here is a 150-residue protein sequence, read N- to C-terminus: Arginine repressor (150 aa).

It belongs to the ArgR family.

The protein localises to the cytoplasm. Its pathway is amino-acid biosynthesis; L-arginine biosynthesis [regulation]. In terms of biological role, regulates arginine biosynthesis genes. The protein is Arginine repressor of Staphylococcus haemolyticus (strain JCSC1435).